The sequence spans 182 residues: Coiled-coil domain-containing protein 32 (182 aa).

A compositionally biased stretch (basic and acidic residues) spans 1–10 (MMIDDFETHA). Disordered regions lie at residues 1 to 61 (MMID…FSPW) and 153 to 182 (PTQN…SPEK). Positions 153–167 (PTQNSETPASSSQTD) are enriched in polar residues. The segment covering 172–182 (EEEEECPSPEK) has biased composition (acidic residues).

Associates with adaptor protein complex 2 (AP-2).

Its subcellular location is the membrane. It localises to the coated pit. In terms of biological role, regulates clathrin-mediated endocytsois of cargos such as transferrin probably through the association and modulation of adaptor protein complex 2 (AP-2). Has a role in ciliogenesis and is required for proper cephalic and left/right axis development. The sequence is that of Coiled-coil domain-containing protein 32 from Danio rerio (Zebrafish).